The sequence spans 695 residues: Sodium-dependent phosphate transport protein 2B (695 aa).

The tract at residues 1–44 (MAPWPELENAHPNPNKFIEGASGPQSSIPDKDKGTSKTNDSGTP) is disordered. Residues 1–90 (MAPWPELENA…KWSERDSKGK (90 aa)) are Cytoplasmic-facing. Residues 91 to 111 (ILCIFQGIGKFILLLGFLYLF) traverse the membrane as a helical segment. At 112 to 136 (VCSLDVLSSAFQLVGGKMAGQFFSN) the chain is on the extracellular side. A helical membrane pass occupies residues 137–157 (NSIMSNPVAGLVIGVLVTVMV). Topologically, residues 158 to 213 (QSSSTSSSIIVSMVASSLLSVRAAIPIIMGANIGTSITNTIVALMQAGDRNEFRRA) are cytoplasmic. Residues 214–234 (FAGATVHDFFNWLSVLVLLPL) traverse the membrane as a helical segment. The Extracellular portion of the chain corresponds to 235–363 (EAATHYLEKL…FVNFSLPDLA (129 aa)). Residues asparagine 295, asparagine 313, asparagine 321, asparagine 340, and asparagine 356 are each glycosylated (N-linked (GlcNAc...) asparagine). Cysteines 303 and 350 form a disulfide. The helical transmembrane segment at 364–384 (VGIILLTVSLLILCGCLIMIV) threads the bilayer. The Cytoplasmic portion of the chain corresponds to 385 to 408 (KLLGSVLRGQVATVIKKTLNTDFP). The chain crosses the membrane as a helical span at residues 409-429 (FPFAWLTGYLAILVGAGMTFI). The Extracellular segment spans residues 430-486 (VQSSSVFTSAMTPLIGIGVISIERAYPLTLGSNIGTTTTAILAALASPGNTLRSSLQ). Residues 487–507 (IALCHFFFNISGILLWYPIPF) form a helical membrane-spanning segment. Over 508-526 (TRLPIRLAKGLGNISAKYR) the chain is Cytoplasmic. Residues 527-547 (WFAVFYLIFFFLLTPLTVFGL) form a helical membrane-spanning segment. Residues 548–551 (SLAG) lie on the Extracellular side of the membrane. A helical transmembrane segment spans residues 552-572 (WPVLVGVGVPIILLILLVLCL). The Cytoplasmic portion of the chain corresponds to 573-695 (RMLQARCPRI…MKALSNTTVF (123 aa)).

Belongs to the SLC34A transporter family. In terms of tissue distribution, highly expressed in the lung, in type II alveolar cells. Moderately expressed in kidney followed by small intestine.

It localises to the apical cell membrane. The catalysed reaction is 3 Na(+)(out) + phosphate(out) = 3 Na(+)(in) + phosphate(in). Functionally, involved in actively transporting phosphate into cells via Na(+) cotransport. This is Sodium-dependent phosphate transport protein 2B (Slc34a2) from Rattus norvegicus (Rat).